The following is a 439-amino-acid chain: Glutamate-1-semialdehyde 2,1-aminomutase (439 aa).

Position 270 is an N6-(pyridoxal phosphate)lysine (Lys270).

Belongs to the class-III pyridoxal-phosphate-dependent aminotransferase family. HemL subfamily. As to quaternary structure, homodimer. The cofactor is pyridoxal 5'-phosphate.

The protein resides in the cytoplasm. The catalysed reaction is (S)-4-amino-5-oxopentanoate = 5-aminolevulinate. It participates in porphyrin-containing compound metabolism; protoporphyrin-IX biosynthesis; 5-aminolevulinate from L-glutamyl-tRNA(Glu): step 2/2. In Kocuria rhizophila (strain ATCC 9341 / DSM 348 / NBRC 103217 / DC2201), this protein is Glutamate-1-semialdehyde 2,1-aminomutase.